The primary structure comprises 338 residues: Anthranilate phosphoribosyltransferase (338 aa).

5-phospho-alpha-D-ribose 1-diphosphate contacts are provided by residues Gly-81, 84-85, Thr-89, 91-94, 109-117, and Ala-121; these read GD, NIST, and KHGNRNLSS. Gly-81 is a binding site for anthranilate. Ser-93 contributes to the Mg(2+) binding site. Asn-112 provides a ligand contact to anthranilate. An anthranilate-binding site is contributed by Arg-167. The Mg(2+) site is built by Asp-226 and Glu-227.

Belongs to the anthranilate phosphoribosyltransferase family. Homodimer. Requires Mg(2+) as cofactor.

It carries out the reaction N-(5-phospho-beta-D-ribosyl)anthranilate + diphosphate = 5-phospho-alpha-D-ribose 1-diphosphate + anthranilate. The protein operates within amino-acid biosynthesis; L-tryptophan biosynthesis; L-tryptophan from chorismate: step 2/5. In terms of biological role, catalyzes the transfer of the phosphoribosyl group of 5-phosphorylribose-1-pyrophosphate (PRPP) to anthranilate to yield N-(5'-phosphoribosyl)-anthranilate (PRA). The chain is Anthranilate phosphoribosyltransferase from Cereibacter sphaeroides (strain KD131 / KCTC 12085) (Rhodobacter sphaeroides).